A 396-amino-acid chain; its full sequence is Putative nickel insertion protein (396 aa).

Residues 333-355 (RSKLARESQTVETPDGPAKGKTV) form a disordered region.

This sequence belongs to the LarC family.

This is Putative nickel insertion protein from Rhodopirellula baltica (strain DSM 10527 / NCIMB 13988 / SH1).